We begin with the raw amino-acid sequence, 688 residues long: Glycine--tRNA ligase beta subunit (688 aa).

It belongs to the class-II aminoacyl-tRNA synthetase family. As to quaternary structure, tetramer of two alpha and two beta subunits.

It is found in the cytoplasm. It carries out the reaction tRNA(Gly) + glycine + ATP = glycyl-tRNA(Gly) + AMP + diphosphate. This Vibrio parahaemolyticus serotype O3:K6 (strain RIMD 2210633) protein is Glycine--tRNA ligase beta subunit.